An 83-amino-acid chain; its full sequence is Urotensin-2 (83 aa).

A propeptide spanning residues 49–71 (EVLLEKQSLLNPFSRVFGIRKQF) is cleaved from the precursor. The cysteines at positions 77 and 82 are disulfide-linked.

It belongs to the urotensin-2 family.

It localises to the secreted. In terms of biological role, urotensin is found in the teleost caudal neurosecretory system. It has a suggested role in osmoregulation and as a corticotropin-releasing factor. The non-hormonal portion of this precursor may be a urotensin binding protein, urophysin. The sequence is that of Urotensin-2 from Platichthys flesus (European flounder).